The sequence spans 268 residues: Indole-3-glycerol phosphate synthase (268 aa).

Belongs to the TrpC family.

The enzyme catalyses 1-(2-carboxyphenylamino)-1-deoxy-D-ribulose 5-phosphate + H(+) = (1S,2R)-1-C-(indol-3-yl)glycerol 3-phosphate + CO2 + H2O. It functions in the pathway amino-acid biosynthesis; L-tryptophan biosynthesis; L-tryptophan from chorismate: step 4/5. The protein is Indole-3-glycerol phosphate synthase of Acinetobacter baumannii (strain ACICU).